The chain runs to 236 residues: EF-hand domain-containing protein D1 (236 aa).

The tract at residues 1-48 is disordered; sequence MASEELASKLQRRLQWEEGDSGLQPAPGAAPDPEPQPQPPAWAPTARA. Over residues 28–42 the composition is skewed to pro residues; it reads GAAPDPEPQPQPPAW. EF-hand domains lie at 87 to 122 and 123 to 158; these read RLIKDLESMFKLYDAGRDGFIDLMELKLMMEKLGAP and QTHLGLKSMIKEVDEDFDGKLSFREFLLIFHKAAAG. Residues aspartate 100, aspartate 104, glutamate 111, aspartate 136, aspartate 138, aspartate 140, lysine 142, and glutamate 147 each coordinate Ca(2+).

Its subcellular location is the mitochondrion inner membrane. In terms of biological role, acts as a calcium sensor for mitochondrial flash (mitoflash) activation, an event characterized by stochastic bursts of superoxide production. May play a role in neuronal differentiation. In Bos taurus (Bovine), this protein is EF-hand domain-containing protein D1 (EFHD1).